We begin with the raw amino-acid sequence, 213 residues long: Inactive ribonuclease-like protein 10 (213 aa).

The N-terminal stretch at 1 to 24 (MKLTLVQFFFMMLLLLLGLGVGLG) is a signal peptide. N-linked (GlcNAc...) asparagine glycosylation occurs at Asn128.

Belongs to the pancreatic ribonuclease family. The N-terminus is blocked. Glycosylated. In terms of tissue distribution, male-specific expression in proximal caput of the epididymis.

It is found in the secreted. In terms of biological role, secreted proximal epididymal protein required for post-testicular sperm maturation and male fertility. May be involved in sperm adhesion to the egg zona pellucida. Does not have ribonuclease activity. This is Inactive ribonuclease-like protein 10 (RNASE10) from Sus scrofa (Pig).